Reading from the N-terminus, the 398-residue chain is Acetate kinase 1 (398 aa).

Asparagine 9 is a Mg(2+) binding site. Lysine 16 contacts ATP. Residue arginine 89 participates in substrate binding. Aspartate 146 acts as the Proton donor/acceptor in catalysis. ATP contacts are provided by residues 206–210, 281–283, and 329–333; these read HLGNG, DCR, and GIGEN. Glutamate 384 provides a ligand contact to Mg(2+).

It belongs to the acetokinase family. As to quaternary structure, homodimer. Mg(2+) is required as a cofactor. It depends on Mn(2+) as a cofactor.

Its subcellular location is the cytoplasm. It carries out the reaction acetate + ATP = acetyl phosphate + ADP. It participates in metabolic intermediate biosynthesis; acetyl-CoA biosynthesis; acetyl-CoA from acetate: step 1/2. Functionally, catalyzes the formation of acetyl phosphate from acetate and ATP. Can also catalyze the reverse reaction. The polypeptide is Acetate kinase 1 (Photobacterium profundum (strain SS9)).